Consider the following 207-residue polypeptide: Thymidylate kinase (207 aa).

ATP is bound at residue 7-14; sequence GCEGTGKT.

The protein belongs to the thymidylate kinase family.

It catalyses the reaction dTMP + ATP = dTDP + ADP. Its function is as follows. Phosphorylation of dTMP to form dTDP in both de novo and salvage pathways of dTTP synthesis. The sequence is that of Thymidylate kinase from Onion yellows phytoplasma (strain OY-M).